Reading from the N-terminus, the 271-residue chain is Mannosyl-3-phosphoglycerate phosphatase (271 aa).

Catalysis depends on D13, which acts as the Nucleophile. Residues D13, D15, and D214 each contribute to the Mg(2+) site.

This sequence belongs to the HAD-like hydrolase superfamily. MPGP family. The cofactor is Mg(2+).

It is found in the cytoplasm. It catalyses the reaction 2-O-(alpha-D-mannosyl)-3-phosphoglycerate + H2O = (2R)-2-O-(alpha-D-mannosyl)-glycerate + phosphate. The sequence is that of Mannosyl-3-phosphoglycerate phosphatase (yedP) from Shigella sonnei (strain Ss046).